The sequence spans 350 residues: 3-isopropylmalate dehydrogenase (350 aa).

Gly76–Glu87 contributes to the NAD(+) binding site. Substrate-binding residues include Arg94, Arg104, Arg132, and Asp217. Residues Asp217, Asp241, and Asp245 each contribute to the Mg(2+) site. Residue Gly275–Asn287 participates in NAD(+) binding.

It belongs to the isocitrate and isopropylmalate dehydrogenases family. LeuB type 1 subfamily. Homodimer. Requires Mg(2+) as cofactor. Mn(2+) serves as cofactor.

The protein resides in the cytoplasm. The enzyme catalyses (2R,3S)-3-isopropylmalate + NAD(+) = 4-methyl-2-oxopentanoate + CO2 + NADH. The protein operates within amino-acid biosynthesis; L-leucine biosynthesis; L-leucine from 3-methyl-2-oxobutanoate: step 3/4. Functionally, catalyzes the oxidation of 3-carboxy-2-hydroxy-4-methylpentanoate (3-isopropylmalate) to 3-carboxy-4-methyl-2-oxopentanoate. The product decarboxylates to 4-methyl-2 oxopentanoate. The chain is 3-isopropylmalate dehydrogenase from Listeria innocua serovar 6a (strain ATCC BAA-680 / CLIP 11262).